The primary structure comprises 796 residues: Molybdenum cofactor sulfurase (796 aa).

Residue Lys246 is modified to N6-(pyridoxal phosphate)lysine. Cys418 is a catalytic residue. The MOSC domain occupies Leu650–Thr796. The residue at position 752 (Ser752) is a Phosphoserine.

This sequence belongs to the class-V pyridoxal-phosphate-dependent aminotransferase family. MOCOS subfamily. Pyridoxal 5'-phosphate is required as a cofactor.

The catalysed reaction is Mo-molybdopterin + L-cysteine + AH2 = thio-Mo-molybdopterin + L-alanine + A + H2O. Its function is as follows. Sulfurates the molybdenum cofactor. Sulfation of molybdenum is essential for xanthine dehydrogenase (XDH) and aldehyde oxidase (ADO) enzymes in which molybdenum cofactor is liganded by 1 oxygen and 1 sulfur atom in active form. This is Molybdenum cofactor sulfurase from Drosophila persimilis (Fruit fly).